Here is an 805-residue protein sequence, read N- to C-terminus: Polycystin-2-like protein 1 (805 aa).

Positions 1–59 (MNAVGSPEGQELQKLGSGAWDNPAYSGPPSPHGTLRVCTISSTGPLQPQPKKPEDEPQE) are disordered. Residues 1-103 (MNAVGSPEGQ…ELYIKTTLRE (103 aa)) are Cytoplasmic-facing. Residue Cys-38 is the site of S-palmitoyl cysteine attachment. Residues 104 to 124 (LLVYIVFLVDICLLTYGMTSS) form a helical membrane-spanning segment. Residues 125–356 (SAYYYTKVMS…NWDFFIVGCE (232 aa)) are Extracellular-facing. N-linked (GlcNAc...) asparagine glycosylation is found at Asn-177 and Asn-207. The cysteines at positions 210 and 223 are disulfide-linked. An N-linked (GlcNAc...) asparagine glycan is attached at Asn-241. The chain crosses the membrane as a helical span at residues 357 to 376 (VIFCVFIFYYVVEEILELHI). Ca(2+)-binding residues include Glu-370 and Glu-373. Residues 377–384 (HRLRYLSS) lie on the Cytoplasmic side of the membrane. The helical transmembrane segment at 385-405 (IWNILDLVVILLSIVAVGFHI) threads the bilayer. Asn-387 and Asp-390 together coordinate Ca(2+). The Extracellular portion of the chain corresponds to 406–433 (FRTLEVNRLMGKLLQQPNTYADFEFLAF). A helical transmembrane segment spans residues 434–454 (WQTQYNNMNAVNLFFAWIKIF). Over 455–479 (KYISFNKTMTQLSSTLARCAKDILG) the chain is Cytoplasmic. Residues 480–499 (FAVMFFIVFFAYAQLGYLLF) form a helical membrane-spanning segment. The Extracellular portion of the chain corresponds to 500 to 511 (GTQVENFSTFIK). The N-linked (GlcNAc...) asparagine glycan is linked to Asn-505. The pore-forming intramembrane region spans 512 to 526 (CIFTQFRIILGDFDY). Residues 527 to 536 (NAIDNANRIL) lie on the Extracellular side of the membrane. Residues 537–557 (GPAYFVTYVFFVFFVLLNMFL) traverse the membrane as a helical segment. The Cytoplasmic segment spans residues 558–805 (AIINDTYSEV…RGEIPTLQRS (248 aa)). The region spanning 633–668 (HEITELTATFTKFDRDGNRILDEKEQEKMRQDLEEE) is the EF-hand domain. Coiled-coil stretches lie at residues 650–686 (NRIL…IVSS) and 700–740 (GWVS…MLER). The segment at 704 to 763 (GEEFYMLTRRVLQLETVLEGVVSQIDAVGSKLKMLERKGWLAPSPGVKEQAIWKHPQPAP) is required for homooligomerization. Residues 759 to 805 (PQPAPAVTPDPWGVQGGQESEVPYKREEEALEERRLSRGEIPTLQRS) form a disordered region. Basic and acidic residues predominate over residues 780 to 796 (VPYKREEEALEERRLSR).

It belongs to the polycystin family. As to quaternary structure, oligomer. Functional PKD2L1 homotetramer can be formed either through C-terminal trimerization followed by N-terminal dimerization of a fourth subunit with a subunit in the trimer or through dimerization followed by trimerization. Heterotetramer with either PKD1L1, PKD1L3 or PKD1; the heterotetrameric complex contains three PKD1L2 chains plus one chain from another family member. Interacts with PKD1L1, forming a ciliary calcium channel. Interacts with PKD1L3, forming a cation channel that is activated by low extracellular pH. Interacts with PKD1; this heteromeric functional cation channels is opened by hypo-osmotic stimulation. Interacts with RACK1; inhibits the channel activity possibly by impairing localization to the cell membrane. Post-translationally, palmitoylation is important for expression at the cell membrane and for channel activity. In terms of tissue distribution, detected in taste bud cells in fungiform papillae (at protein level). Ubiquitous. Expressed in adult heart, skeletal muscle, brain, spleen, testis, retina and liver. Isoform 4 appears to be expressed only in transformed lymphoblasts.

The protein resides in the cell projection. It localises to the cilium membrane. It is found in the cell membrane. The protein localises to the cytoplasmic vesicle. The enzyme catalyses Ca(2+)(in) = Ca(2+)(out). The catalysed reaction is Na(+)(in) = Na(+)(out). It carries out the reaction K(+)(in) = K(+)(out). It catalyses the reaction Mg(2+)(in) = Mg(2+)(out). The non-selective cation channel is gated following an off-response property by acid: gated open after the removal of acid stimulus, but not during acid application. Channel activity is inhibited by phosphatidylinositol-4,5-bisphosphate (PIP2). Non-selective cation channel activity is substantially increased when either the extracellular or intracellular calcium-ion concentration is raised. Regulation of non-selective cation channel activity by external calcium is bimodal, first sensitizing and subsequently inactivating the current. Functionally, homotetrameric, non-selective cation channel that is permeable to sodium, potassium, magnesium and calcium. Also forms functionnal heteromeric channels with PKD1, PKD1L1 and PKD1L3. Pore-forming subunit of a heterotetrameric, non-selective cation channel, formed by PKD1L2 and PKD1L3, that is permeable to sodium, potassium, magnesium and calcium and which may act as a sour taste receptor in gustatory cells; however, its contribution to sour taste perception is unclear in vivo and may be indirect. The homomeric and heteromeric channels formed by PKD1L2 and PKD1L3 are activated by low pH and Ca(2+), but opens only when the extracellular pH rises again and after the removal of acid stimulus. Pore-forming subunit of a calcium-permeant ion channel formed by PKD1L2 and PKD1L1 in primary cilia, where it controls cilium calcium concentration, without affecting cytoplasmic calcium concentration, and regulates sonic hedgehog/SHH signaling and GLI2 transcription. The PKD1L1:PKD2L1 complex channel is mechanosensitive only at high pressures and is highly temperature sensitive. Pore-forming subunit of a calcium-permeant ion channel formed by PKD1L2 and PKD1 that produces a transient increase in intracellular calcium concentration upon hypo-osmotic stimulation (200 mOsm). May play a role in the perception of carbonation taste. May play a role in the sensory perception of water, via a mechanism that activates the channel in response to dilution of salivary bicarbonate and changes in salivary pH. The chain is Polycystin-2-like protein 1 from Homo sapiens (Human).